A 91-amino-acid chain; its full sequence is Uteroglobin (91 aa).

The N-terminal stretch at 1–21 (MKLTITLALVTLALLCSPASA) is a signal peptide.

This sequence belongs to the secretoglobin family. In terms of assembly, antiparallel homodimer; disulfide-linked. Interaction with LMBR1L is controversial.

It is found in the secreted. Uteroglobin binds progesterone specifically and with high affinity. It may regulate progesterone concentrations reaching the blastocyst. It is also a potent inhibitor of phospholipase A2. The sequence is that of Uteroglobin (SCGB1A1) from Lepus capensis (Brown hare).